A 373-amino-acid chain; its full sequence is Eukaryotic translation initiation factor 3 subunit M (373 aa).

Position 2 is an N-acetylserine (Ser2). Phosphoserine occurs at positions 2 and 152. The PCI domain occupies 180–338 (AASKVMVELL…RKVVVSHSTH (159 aa)). Lys253 bears the N6-acetyllysine mark. Position 366 is a phosphoserine (Ser366).

This sequence belongs to the eIF-3 subunit M family. In terms of assembly, component of the eukaryotic translation initiation factor 3 (eIF-3) complex, which is composed of 13 subunits: EIF3A, EIF3B, EIF3C, EIF3D, EIF3E, EIF3F, EIF3G, EIF3H, EIF3I, EIF3J, EIF3K, EIF3L and EIF3M. The eIF-3 complex appears to include 3 stable modules: module A is composed of EIF3A, EIF3B, EIF3G and EIF3I; module B is composed of EIF3F, EIF3H, and EIF3M; and module C is composed of EIF3C, EIF3D, EIF3E, EIF3K and EIF3L. EIF3C of module C binds EIF3B of module A and EIF3H of module B, thereby linking the three modules. EIF3J is a labile subunit that binds to the eIF-3 complex via EIF3B. The eIF-3 complex interacts with RPS6KB1 under conditions of nutrient depletion. Mitogenic stimulation leads to binding and activation of a complex composed of MTOR and RPTOR, leading to phosphorylation and release of RPS6KB1 and binding of EIF4B to eIF-3.

It localises to the cytoplasm. In terms of biological role, component of the eukaryotic translation initiation factor 3 (eIF-3) complex, which is required for several steps in the initiation of protein synthesis. The eIF-3 complex associates with the 40S ribosome and facilitates the recruitment of eIF-1, eIF-1A, eIF-2:GTP:methionyl-tRNAi and eIF-5 to form the 43S pre-initiation complex (43S PIC). The eIF-3 complex stimulates mRNA recruitment to the 43S PIC and scanning of the mRNA for AUG recognition. The eIF-3 complex is also required for disassembly and recycling of post-termination ribosomal complexes and subsequently prevents premature joining of the 40S and 60S ribosomal subunits prior to initiation. The eIF-3 complex specifically targets and initiates translation of a subset of mRNAs involved in cell proliferation, including cell cycling, differentiation and apoptosis, and uses different modes of RNA stem-loop binding to exert either translational activation or repression. The chain is Eukaryotic translation initiation factor 3 subunit M from Bos taurus (Bovine).